Consider the following 260-residue polypeptide: MQKHYHKLISYLCDFLEKETQKRGFKKVVYGLSGGLDSAVVGVLSQKVFKENAHALLMPSLVSMPESKSDALDLCETFSIPYTEYSIAPYDAIFCSYFKDASLTRKGNFCSRLRMAFLYDYSLKSNSLVIGTSNKSERMLGYGTLFGDLACAINPIGELFKTEVYELAQHLNIPKKILDKPPSADLFVGQSDEKDLGYPYSVIDPLLKDIEALFRTKPIHLETLTQLGYDETLVKNTISRIQKNAFKLELPTIAKRFDPK.

Position 31 to 38 (31 to 38 (GLSGGLDS)) interacts with ATP. Residue aspartate 37 coordinates Mg(2+). A deamido-NAD(+)-binding site is contributed by arginine 112. Residue threonine 132 participates in ATP binding. Glutamate 137 lines the Mg(2+) pocket. Lysine 161 and serine 183 together coordinate ATP.

Belongs to the NAD synthetase family. In terms of assembly, homodimer.

The enzyme catalyses deamido-NAD(+) + NH4(+) + ATP = AMP + diphosphate + NAD(+) + H(+). It functions in the pathway cofactor biosynthesis; NAD(+) biosynthesis; NAD(+) from deamido-NAD(+) (ammonia route): step 1/1. Catalyzes the ATP-dependent amidation of deamido-NAD to form NAD. Uses ammonia as a nitrogen source. The polypeptide is NH(3)-dependent NAD(+) synthetase (Helicobacter acinonychis (strain Sheeba)).